The primary structure comprises 313 residues: Protein FixB (313 aa).

255–283 is a binding site for FAD; it reads LYLAVGISGQIQHMVGANGAQTIFAINKD.

The protein belongs to the ETF alpha-subunit/FixB family. In terms of assembly, heterodimer of FixA and FixB.

It participates in amine and polyamine metabolism; carnitine metabolism. In terms of biological role, required for anaerobic carnitine reduction. May bring reductant to CaiA. This is Protein FixB from Salmonella agona (strain SL483).